A 91-amino-acid chain; its full sequence is Sec-independent protein translocase protein TatA (91 aa).

A helical transmembrane segment spans residues 1-21 (MGAMQPMHWLIVAVVVVILFG).

It belongs to the TatA/E family. The Tat system comprises two distinct complexes: a TatABC complex, containing multiple copies of TatA, TatB and TatC subunits, and a separate TatA complex, containing only TatA subunits. Substrates initially bind to the TatABC complex, which probably triggers association of the separate TatA complex to form the active translocon.

The protein localises to the cell membrane. Part of the twin-arginine translocation (Tat) system that transports large folded proteins containing a characteristic twin-arginine motif in their signal peptide across membranes. TatA could form the protein-conducting channel of the Tat system. The chain is Sec-independent protein translocase protein TatA from Rhodococcus erythropolis (strain PR4 / NBRC 100887).